The chain runs to 917 residues: Nitrate reductase [NADH] 1 (917 aa).

Positions 62-81 are disordered; the sequence is DSYDDSSSDDEDESHNRNVP. A compositionally biased stretch (acidic residues) spans 63–74; sequence SYDDSSSDDEDE. Residue cysteine 197 participates in Mo-molybdopterin binding. The Cytochrome b5 heme-binding domain maps to 545–620; that stretch reads SKMYSISEVR…LEDYRIGELI (76 aa). Histidine 580 and histidine 603 together coordinate heme. The 113-residue stretch at 660 to 772 folds into the FAD-binding FR-type domain; that stretch reads REKIPVRLIE…KGPLGHIEYK (113 aa). FAD contacts are provided by residues 712–715, 729–733, phenylalanine 734, phenylalanine 741, 746–748, and threonine 799; these read RAYT, VVKVY, and LMS.

The protein belongs to the nitrate reductase family. Homodimer. Requires FAD as cofactor. Heme serves as cofactor. The cofactor is Mo-molybdopterin. As to expression, root, leaf, and shoot.

The enzyme catalyses nitrite + NAD(+) + H2O = nitrate + NADH + H(+). Its function is as follows. Nitrate reductase is a key enzyme involved in the first step of nitrate assimilation in plants, fungi and bacteria. This Arabidopsis thaliana (Mouse-ear cress) protein is Nitrate reductase [NADH] 1 (NIA1).